We begin with the raw amino-acid sequence, 815 residues long: Putative transcription factor phnE (815 aa).

The disordered stretch occupies residues 522–577 (PSRRNSDGSAHSSPSSTPSSSSTSSPLPSPASERPPPLDVVTRPSTGTSTPSSPTL). Low complexity predominate over residues 523-547 (SRRNSDGSAHSSPSSTPSSSSTSSP). The segment covering 548–559 (LPSPASERPPPL) has biased composition (pro residues). Positions 563–577 (TRPSTGTSTPSSPTL) are enriched in low complexity.

Its subcellular location is the nucleus. In terms of biological role, putative transcription factor that may be involved in the regulation of the expression of the gene cluster that mediates the biosynthesis of phenalenones such as herqueinone, compounds that have been reported to treat tumors, bacterial infections and/or mycoses, and rheumatic diseases. The polypeptide is Putative transcription factor phnE (Penicillium herquei).